The chain runs to 480 residues: Glutamate--tRNA ligase (480 aa).

The 'HIGH' region motif lies at 21–31; the sequence is PSPTGYLHVGG. Zn(2+) is bound by residues Cys110, Cys112, Cys137, and His139. The 'KMSKS' region signature appears at 248-252; the sequence is KLSKR. Lys251 is an ATP binding site.

It belongs to the class-I aminoacyl-tRNA synthetase family. Glutamate--tRNA ligase type 1 subfamily. As to quaternary structure, monomer. Zn(2+) serves as cofactor.

Its subcellular location is the cytoplasm. It catalyses the reaction tRNA(Glu) + L-glutamate + ATP = L-glutamyl-tRNA(Glu) + AMP + diphosphate. Its function is as follows. Catalyzes the attachment of glutamate to tRNA(Glu) in a two-step reaction: glutamate is first activated by ATP to form Glu-AMP and then transferred to the acceptor end of tRNA(Glu). The protein is Glutamate--tRNA ligase of Histophilus somni (strain 2336) (Haemophilus somnus).